The sequence spans 408 residues: MFLNSLDLPGQPDNSRIVVAMSGGVDSSVVAGLLKKEGYDVIGITLQLYDHGAATHRVGACCAGQDIEDARRVAETLGIPHYVLDYEKRFREAVIDPFAESYAHGETPVPCVACNQTVKFADLLATARELGADALATGHYIRSRPHGAHRALFRPFDVERDQSYFLFATTQEQIDYLRFPLGDLPKAHVREIATEMGFVVADKHDSQDICFVPQGKYSDVITKLRPEAVNPGVIVHIDGQVLGKHSGIVNYTVGQRRGIGVATGEALYVVYLDVENARVIVGPREMLETHKLFLRDVNWLGDERLDNFPSDGLEMAVKVRSTRPSHLARLHYQEGVFSVDFLECENSVAPGQACVFYDGNGDGARILGGGFVTHSQRAVGVEMMLRRVLCNPETKAAVSSEFKTTASK.

ATP-binding positions include 20–27 (AMSGGVDS) and Leu46. The Nucleophile role is filled by Cys114. The cysteines at positions 114 and 210 are disulfide-linked. Gly138 is an ATP binding site. Residues 160-162 (RDQ) form an interaction with tRNA region. Cys210 acts as the Cysteine persulfide intermediate in catalysis.

The protein belongs to the MnmA/TRMU family.

The protein resides in the cytoplasm. It carries out the reaction S-sulfanyl-L-cysteinyl-[protein] + uridine(34) in tRNA + AH2 + ATP = 2-thiouridine(34) in tRNA + L-cysteinyl-[protein] + A + AMP + diphosphate + H(+). In terms of biological role, catalyzes the 2-thiolation of uridine at the wobble position (U34) of tRNA, leading to the formation of s(2)U34. In Bartonella quintana (strain Toulouse) (Rochalimaea quintana), this protein is tRNA-specific 2-thiouridylase MnmA.